Here is a 508-residue protein sequence, read N- to C-terminus: Photosystem II CP47 reaction center protein (508 aa).

A run of 6 helical transmembrane segments spans residues 21 to 36, 101 to 115, 140 to 156, 203 to 218, 237 to 252, and 457 to 472; these read AVHI…WAGS, IVFS…IWHW, GIHL…FGAF, IAAG…FHLS, VLSS…AFVV, and SFAL…HGSR.

The protein belongs to the PsbB/PsbC family. PsbB subfamily. PSII is composed of 1 copy each of membrane proteins PsbA, PsbB, PsbC, PsbD, PsbE, PsbF, PsbH, PsbI, PsbJ, PsbK, PsbL, PsbM, PsbT, PsbX, PsbY, PsbZ, Psb30/Ycf12, at least 3 peripheral proteins of the oxygen-evolving complex and a large number of cofactors. It forms dimeric complexes. The cofactor is Binds multiple chlorophylls. PSII binds additional chlorophylls, carotenoids and specific lipids..

It is found in the plastid. The protein resides in the chloroplast thylakoid membrane. Functionally, one of the components of the core complex of photosystem II (PSII). It binds chlorophyll and helps catalyze the primary light-induced photochemical processes of PSII. PSII is a light-driven water:plastoquinone oxidoreductase, using light energy to abstract electrons from H(2)O, generating O(2) and a proton gradient subsequently used for ATP formation. This chain is Photosystem II CP47 reaction center protein, found in Populus trichocarpa (Western balsam poplar).